A 353-amino-acid polypeptide reads, in one-letter code: Fe(3+) ions import ATP-binding protein FbpC (353 aa).

The 231-residue stretch at valine 9–methionine 239 folds into the ABC transporter domain. Glycine 41 to threonine 48 contacts ATP.

The protein belongs to the ABC transporter superfamily. Fe(3+) ion importer (TC 3.A.1.10) family. In terms of assembly, the complex is composed of two ATP-binding proteins (FbpC), two transmembrane proteins (FbpB) and a solute-binding protein (FbpA).

It is found in the cell inner membrane. It carries out the reaction Fe(3+)(out) + ATP + H2O = Fe(3+)(in) + ADP + phosphate + H(+). In terms of biological role, part of the ABC transporter complex FbpABC involved in Fe(3+) ions import. Responsible for energy coupling to the transport system. The polypeptide is Fe(3+) ions import ATP-binding protein FbpC (Brucella melitensis biotype 1 (strain ATCC 23456 / CCUG 17765 / NCTC 10094 / 16M)).